We begin with the raw amino-acid sequence, 475 residues long: Cysteine--tRNA ligase (475 aa).

Cys28 serves as a coordination point for Zn(2+). The 'HIGH' region motif lies at 30 to 40 (PTVYDYAHIGN). Zn(2+) contacts are provided by Cys213, His238, and Glu242. The 'KMSKS' region motif lies at 270-274 (KMSKS). Lys273 provides a ligand contact to ATP.

Belongs to the class-I aminoacyl-tRNA synthetase family. As to quaternary structure, monomer. It depends on Zn(2+) as a cofactor.

It localises to the cytoplasm. The catalysed reaction is tRNA(Cys) + L-cysteine + ATP = L-cysteinyl-tRNA(Cys) + AMP + diphosphate. This is Cysteine--tRNA ligase (cysS) from Chlamydia muridarum (strain MoPn / Nigg).